Consider the following 88-residue polypeptide: Small ribosomal subunit protein bS16 (88 aa).

The protein belongs to the bacterial ribosomal protein bS16 family.

The chain is Small ribosomal subunit protein bS16 from Pelotomaculum thermopropionicum (strain DSM 13744 / JCM 10971 / SI).